A 580-amino-acid polypeptide reads, in one-letter code: Arginine--tRNA ligase (580 aa).

A 'HIGH' region motif is present at residues 137–147 (ANPTGPLHIGH).

Belongs to the class-I aminoacyl-tRNA synthetase family. In terms of assembly, monomer.

It localises to the cytoplasm. The enzyme catalyses tRNA(Arg) + L-arginine + ATP = L-arginyl-tRNA(Arg) + AMP + diphosphate. The sequence is that of Arginine--tRNA ligase from Anaplasma phagocytophilum (strain HZ).